A 442-amino-acid polypeptide reads, in one-letter code: Putative mannan endo-1,6-alpha-mannosidase C970.02 (442 aa).

A signal peptide spans 1–19 (MSLTIFISLATILFSFAEA). N-linked (GlcNAc...) asparagine glycans are attached at residues asparagine 25, asparagine 82, asparagine 107, asparagine 131, asparagine 201, asparagine 236, asparagine 261, asparagine 264, asparagine 277, and asparagine 361.

This sequence belongs to the glycosyl hydrolase 76 family.

The enzyme catalyses Random hydrolysis of (1-&gt;6)-alpha-D-mannosidic linkages in unbranched (1-&gt;6)-mannans.. This Schizosaccharomyces pombe (strain 972 / ATCC 24843) (Fission yeast) protein is Putative mannan endo-1,6-alpha-mannosidase C970.02.